The sequence spans 356 residues: tRNA N6-adenosine threonylcarbamoyltransferase (356 aa).

Residues His115 and His119 each coordinate Fe cation. Residues 138–142 (LVSGG), Asp171, Gly184, and Asn277 contribute to the substrate site. Asp305 is a binding site for Fe cation.

Belongs to the KAE1 / TsaD family. Requires Fe(2+) as cofactor.

It localises to the cytoplasm. It carries out the reaction L-threonylcarbamoyladenylate + adenosine(37) in tRNA = N(6)-L-threonylcarbamoyladenosine(37) in tRNA + AMP + H(+). Its function is as follows. Required for the formation of a threonylcarbamoyl group on adenosine at position 37 (t(6)A37) in tRNAs that read codons beginning with adenine. Is involved in the transfer of the threonylcarbamoyl moiety of threonylcarbamoyl-AMP (TC-AMP) to the N6 group of A37, together with TsaE and TsaB. TsaD likely plays a direct catalytic role in this reaction. The chain is tRNA N6-adenosine threonylcarbamoyltransferase from Polaromonas naphthalenivorans (strain CJ2).